The sequence spans 843 residues: N-acetyltransferase ESCO1 (843 aa).

The interval M1 to A78 is disordered. Residues S18–E28 are compositionally biased toward acidic residues. Over residues S66 to A78 the composition is skewed to polar residues. S202 is modified (phosphoserine). Residues N262–K300 form a disordered region. A compositionally biased stretch (polar residues) spans H269–R278. Residue K335 forms a Glycyl lysine isopeptide (Lys-Gly) (interchain with G-Cter in SUMO2) linkage. Residue S415 is modified to Phosphoserine. Positions D546–D584 are disordered. A compositionally biased stretch (basic and acidic residues) spans S566–D584. The CCHH-type zinc finger occupies V620–H644. Acetyl-CoA contacts are provided by residues I775–V777, R783–S788, and T815–D817.

It belongs to the acetyltransferase family. ECO subfamily. As to quaternary structure, the subunit structure is controversial. Monomer. Homodimer. In terms of processing, phosphorylated during mitosis.

The protein localises to the nucleus. It localises to the chromosome. It carries out the reaction L-lysyl-[protein] + acetyl-CoA = N(6)-acetyl-L-lysyl-[protein] + CoA + H(+). Functionally, acetyltransferase required for the establishment of sister chromatid cohesion. Couples the processes of cohesion and DNA replication to ensure that only sister chromatids become paired together. In contrast to the structural cohesins, the deposition and establishment factors are required only during S phase. Acts by mediating the acetylation of cohesin component SMC3. The protein is N-acetyltransferase ESCO1 (Esco1) of Mus musculus (Mouse).